A 994-amino-acid chain; its full sequence is Regulator of telomere elongation helicase 1 homolog (994 aa).

In terms of domain architecture, Helicase ATP-binding spans 7–316; it reads AGIPVHFPFE…DDLMLLKEML (310 aa). An ATP-binding site is contributed by 42 to 49; the sequence is SPTGTGKT. [4Fe-4S] cluster contacts are provided by Cys-146, Cys-164, Cys-173, and Cys-209. A DEAH box motif is present at residues 252-255; sequence DEAH. The tract at residues 861–887 is disordered; sequence SSGLVKIHKRERSSPPGSSQSSSQTAK. Low complexity predominate over residues 874–884; it reads SPPGSSQSSSQ.

It belongs to the helicase family. RAD3/XPD subfamily.

It is found in the nucleus. The enzyme catalyses ATP + H2O = ADP + phosphate + H(+). Functionally, a probable ATP-dependent DNA helicase implicated in DNA repair and the maintenance of genomic stability. Acts as an anti-recombinase to counteract toxic recombination and limit crossover during meiosis. Regulates meiotic recombination and crossover homeostasis by physically dissociating strand invasion events and thereby promotes noncrossover repair by meiotic synthesis dependent strand annealing (SDSA) as well as disassembly of D loop recombination intermediates. The sequence is that of Regulator of telomere elongation helicase 1 homolog from Drosophila ananassae (Fruit fly).